A 493-amino-acid chain; its full sequence is Galactose-1-phosphate uridylyltransferase (493 aa).

Belongs to the galactose-1-phosphate uridylyltransferase type 2 family.

The protein localises to the cytoplasm. It carries out the reaction alpha-D-galactose 1-phosphate + UDP-alpha-D-glucose = alpha-D-glucose 1-phosphate + UDP-alpha-D-galactose. It participates in carbohydrate metabolism; galactose metabolism. The protein is Galactose-1-phosphate uridylyltransferase of Lactococcus lactis subsp. cremoris (strain MG1363).